We begin with the raw amino-acid sequence, 655 residues long: Protein nipi-3 (655 aa).

Residues 1 to 35 (MARTKCKTKTVANPRTGVRKTAKDLSEPVRQDAVS) form a disordered region. Basic and acidic residues predominate over residues 21–35 (TAKDLSEPVRQDAVS). Positions 200-470 (IGIFVIYGTG…NQVNGDFPEI (271 aa)) constitute a Protein kinase domain. ATP contacts are provided by residues 206-214 (YGTGLVTRA) and lysine 235.

The protein belongs to the protein kinase superfamily. CAMK Ser/Thr protein kinase family. As to quaternary structure, may interact with transcription factor cebp-1 (via N-terminus). As to expression, expressed in epidermis, pharynx, intestine, a subset of head neurons and motoneurons.

Its subcellular location is the nucleus. Its function is as follows. Adapter protein that regulates different signaling pathways. Required for larval development and viability. Involved in negatively modulating pmk-1 p38/MAPK signaling. Involved in innate immunity, acting either in a manner dependent upon, or independent of, the pmk-1 or pmk-3 p38/MAPK pathways. Has a protective role in response to infection by the Gram-negative bacterium P.aeruginosa, acting by negatively modulating expression of cebp-1, and regulating the pmk-1 p38/MAPK pathway, leading to activation of transcription factor skn-1. Required to prevent P.aeruginosa toxin ToxA-mediated lethality, probably acting via modulating the effects of translational inhibition caused by the toxin. By regulating the up-regulation in the epidermis of antimicrobial peptides nlp-29 and nlp-31, plays a role in resistance to fungal infection. This Caenorhabditis elegans protein is Protein nipi-3.